A 205-amino-acid polypeptide reads, in one-letter code: Small ribosomal subunit protein uS4 (205 aa).

A compositionally biased stretch (basic and acidic residues) spans 1–16 (MSKRESSKYKIDRRMG). A disordered region spans residues 1-46 (MSKRESSKYKIDRRMGENIWGRPKSPVNRREYGPGQHGQRRKGKLS). The S4 RNA-binding domain occupies 94–157 (SRLDAIVYRA…KQLVIVLEAV (64 aa)).

Belongs to the universal ribosomal protein uS4 family. In terms of assembly, part of the 30S ribosomal subunit. Contacts protein S5. The interaction surface between S4 and S5 is involved in control of translational fidelity.

One of the primary rRNA binding proteins, it binds directly to 16S rRNA where it nucleates assembly of the body of the 30S subunit. Functionally, with S5 and S12 plays an important role in translational accuracy. This chain is Small ribosomal subunit protein uS4, found in Rhizobium johnstonii (strain DSM 114642 / LMG 32736 / 3841) (Rhizobium leguminosarum bv. viciae).